We begin with the raw amino-acid sequence, 200 residues long: Pyridoxal phosphate homeostasis protein (200 aa).

Residue lysine 11 is modified to N6-(pyridoxal phosphate)lysine.

It belongs to the pyridoxal phosphate-binding protein YggS/PROSC family. In terms of assembly, monomer.

Functionally, pyridoxal 5'-phosphate (PLP)-binding protein, which is involved in PLP homeostasis. The protein is Pyridoxal phosphate homeostasis protein of Buchnera aphidicola subsp. Acyrthosiphon pisum (strain APS) (Acyrthosiphon pisum symbiotic bacterium).